Consider the following 240-residue polypeptide: 2,3-bisphosphoglycerate-dependent phosphoglycerate mutase (240 aa).

Residues 5 to 12 (RHGESVWN), 18 to 19 (TG), arginine 57, 84 to 87 (ERHY), lysine 95, 111 to 112 (RR), and 180 to 181 (GN) contribute to the substrate site. The active-site Tele-phosphohistidine intermediate is histidine 6. Residue glutamate 84 is the Proton donor/acceptor of the active site.

This sequence belongs to the phosphoglycerate mutase family. BPG-dependent PGAM subfamily. In terms of assembly, homodimer.

It catalyses the reaction (2R)-2-phosphoglycerate = (2R)-3-phosphoglycerate. It functions in the pathway carbohydrate degradation; glycolysis; pyruvate from D-glyceraldehyde 3-phosphate: step 3/5. Catalyzes the interconversion of 2-phosphoglycerate and 3-phosphoglycerate. This chain is 2,3-bisphosphoglycerate-dependent phosphoglycerate mutase, found in Nitrosococcus oceani (strain ATCC 19707 / BCRC 17464 / JCM 30415 / NCIMB 11848 / C-107).